A 261-amino-acid chain; its full sequence is Triosephosphate isomerase (261 aa).

10 to 12 (NWK) contacts substrate. H100 acts as the Electrophile in catalysis. E172 functions as the Proton acceptor in the catalytic mechanism. Residues G178, S218, and 239–240 (GG) each bind substrate.

The protein belongs to the triosephosphate isomerase family. Homodimer.

The protein resides in the cytoplasm. The enzyme catalyses D-glyceraldehyde 3-phosphate = dihydroxyacetone phosphate. It functions in the pathway carbohydrate biosynthesis; gluconeogenesis. The protein operates within carbohydrate degradation; glycolysis; D-glyceraldehyde 3-phosphate from glycerone phosphate: step 1/1. In terms of biological role, involved in the gluconeogenesis. Catalyzes stereospecifically the conversion of dihydroxyacetone phosphate (DHAP) to D-glyceraldehyde-3-phosphate (G3P). The sequence is that of Triosephosphate isomerase from Mycobacterium avium (strain 104).